The sequence spans 172 residues: NAD(P)H-quinone oxidoreductase subunit I, chloroplastic (172 aa).

2 consecutive 4Fe-4S ferredoxin-type domains span residues 55-84 and 95-124; these read GRIH…VDWK and LNYS…MTEE. Residues C64, C67, C70, C74, C104, C107, C110, and C114 each contribute to the [4Fe-4S] cluster site.

Belongs to the complex I 23 kDa subunit family. NDH is composed of at least 16 different subunits, 5 of which are encoded in the nucleus. It depends on [4Fe-4S] cluster as a cofactor.

It is found in the plastid. Its subcellular location is the chloroplast thylakoid membrane. It carries out the reaction a plastoquinone + NADH + (n+1) H(+)(in) = a plastoquinol + NAD(+) + n H(+)(out). It catalyses the reaction a plastoquinone + NADPH + (n+1) H(+)(in) = a plastoquinol + NADP(+) + n H(+)(out). NDH shuttles electrons from NAD(P)H:plastoquinone, via FMN and iron-sulfur (Fe-S) centers, to quinones in the photosynthetic chain and possibly in a chloroplast respiratory chain. The immediate electron acceptor for the enzyme in this species is believed to be plastoquinone. Couples the redox reaction to proton translocation, and thus conserves the redox energy in a proton gradient. The protein is NAD(P)H-quinone oxidoreductase subunit I, chloroplastic of Olimarabidopsis pumila (Dwarf rocket).